The following is a 138-amino-acid chain: Large ribosomal subunit protein uL16 (138 aa).

The protein belongs to the universal ribosomal protein uL16 family. In terms of assembly, part of the 50S ribosomal subunit.

Binds 23S rRNA and is also seen to make contacts with the A and possibly P site tRNAs. This chain is Large ribosomal subunit protein uL16, found in Rhodospirillum rubrum (strain ATCC 11170 / ATH 1.1.1 / DSM 467 / LMG 4362 / NCIMB 8255 / S1).